We begin with the raw amino-acid sequence, 332 residues long: Mitochondrial glycine transporter (332 aa).

3 Solcar repeats span residues serine 11–asparagine 94, leucine 121–arginine 205, and threonine 235–arginine 319. The next 6 membrane-spanning stretches (helical) occupy residues phenylalanine 17–glutamine 42, glycine 69–valine 95, leucine 127–glutamate 152, glycine 180–lysine 203, isoleucine 239–isoleucine 265, and glycine 294–isoleucine 312.

Belongs to the mitochondrial carrier (TC 2.A.29) family. SLC25A38 subfamily.

The protein resides in the mitochondrion inner membrane. It catalyses the reaction glycine(in) = glycine(out). Mitochondrial glycine transporter that imports glycine into the mitochondrial matrix. Plays an important role in providing glycine for the first enzymatic step in heme biosynthesis, the condensation of glycine with succinyl-CoA to produce 5-aminolevulinate (ALA) in the mitochondrial matrix. This Botryotinia fuckeliana (strain B05.10) (Noble rot fungus) protein is Mitochondrial glycine transporter.